The primary structure comprises 809 residues: Lon protease (809 aa).

The region spanning 8–203 (LPVVALRNMA…RLCLILADEI (196 aa)) is the Lon N-terminal domain. 354–361 (GPPGTGKT) is a binding site for ATP. The 181-residue stretch at 629 to 809 (KDEVGIVCGL…MDEVLKHALV (181 aa)) folds into the Lon proteolytic domain. Residues Ser716 and Lys759 contribute to the active site.

Belongs to the peptidase S16 family. Homohexamer. Organized in a ring with a central cavity.

The protein resides in the cytoplasm. It catalyses the reaction Hydrolysis of proteins in presence of ATP.. Its function is as follows. ATP-dependent serine protease that mediates the selective degradation of mutant and abnormal proteins as well as certain short-lived regulatory proteins. Required for cellular homeostasis and for survival from DNA damage and developmental changes induced by stress. Degrades polypeptides processively to yield small peptide fragments that are 5 to 10 amino acids long. Binds to DNA in a double-stranded, site-specific manner. In Lachnoclostridium phytofermentans (strain ATCC 700394 / DSM 18823 / ISDg) (Clostridium phytofermentans), this protein is Lon protease.